A 120-amino-acid polypeptide reads, in one-letter code: UPF0231 protein CKO_03249 (120 aa).

It belongs to the UPF0231 family.

In Citrobacter koseri (strain ATCC BAA-895 / CDC 4225-83 / SGSC4696), this protein is UPF0231 protein CKO_03249.